Here is a 430-residue protein sequence, read N- to C-terminus: Hydrogenobyrinate a,c-diamide synthase (430 aa).

Residues 239-422 (RIGVARDAAF…IHFYLPSDPL (184 aa)) enclose the GATase cobBQ-type domain. C321 serves as the catalytic Nucleophile.

This sequence belongs to the CobB/CbiA family. The cofactor is Mg(2+).

It catalyses the reaction hydrogenobyrinate + 2 L-glutamine + 2 ATP + 2 H2O = hydrogenobyrinate a,c-diamide + 2 L-glutamate + 2 ADP + 2 phosphate + 2 H(+). The protein operates within cofactor biosynthesis; adenosylcobalamin biosynthesis; cob(II)yrinate a,c-diamide from precorrin-2 (aerobic route): step 9/10. Functionally, catalyzes the ATP-dependent amidation of the two carboxylate groups at positions a and c of hydrogenobyrinate, using either L-glutamine or ammonia as the nitrogen source. This is Hydrogenobyrinate a,c-diamide synthase from Stutzerimonas stutzeri (strain A1501) (Pseudomonas stutzeri).